A 355-amino-acid polypeptide reads, in one-letter code: Neutral protease 2 homolog MEP6 (355 aa).

A signal peptide spans 1–19; the sequence is MRLSSSLIALVALAGQALA. The propeptide occupies 20–179; it reads LPFNELAERD…ASAIPELNKR (160 aa). Intrachain disulfides connect Cys-187–Cys-259 and Cys-266–Cys-283. His-307 lines the Zn(2+) pocket. Glu-308 is a catalytic residue. Zn(2+) is bound by residues His-311 and Asp-322.

This sequence belongs to the peptidase M35 family. Requires Zn(2+) as cofactor.

It localises to the secreted. The catalysed reaction is Preferential cleavage of bonds with hydrophobic residues in P1'. Also 3-Asn-|-Gln-4 and 8-Gly-|-Ser-9 bonds in insulin B chain.. Secreted metalloproteinase that allows assimilation of proteinaceous substrates. Shows high activities on basic nuclear substrates such as histone and protamine. May be involved in virulence. The chain is Neutral protease 2 homolog MEP6 (MEP6) from Coccidioides posadasii (strain C735) (Valley fever fungus).